A 530-amino-acid chain; its full sequence is Protein transport protein SEC9 (530 aa).

The tract at residues 1–274 (MGIKKMFQKK…QPANDYNLDL (274 aa)) is disordered. Basic and acidic residues predominate over residues 8–22 (QKKEPTEQEIREELS). Composition is skewed to low complexity over residues 61 to 100 (NPYA…NNGG) and 122 to 141 (GSSP…SSNP). Positions 142–160 (YGNNNGSRSSQNTSSPYAK) are enriched in polar residues. The span at 161 to 202 (STNNSSYSNSPYSGSTVNNGNRGGHSNNSNSSAGGNPYAAGG) shows a compositional bias: low complexity. Composition is skewed to polar residues over residues 203-228 (RSSQ…RQTQ) and 258-268 (RNQQSSQQPAN). T-SNARE coiled-coil homology domains are found at residues 313–375 (KFVK…VKEL) and 467–529 (DDME…LNNI).

Belongs to the SNAP-25 family.

It localises to the membrane. Late secretory t-SNARE protein required for secretion and proper cytokinesis. Plays an important role in the secretion of virulence-associated extracellular enzymes and vesicle-mediated polarized hyphal growth. In Candida albicans (strain SC5314 / ATCC MYA-2876) (Yeast), this protein is Protein transport protein SEC9 (SEC9).